Consider the following 257-residue polypeptide: MSILSLVGLGISKKFITENAIDTLNNSDIIIFDKYTSRSCDINVDVLRRLVKGGKTLIEADRSLLENNSKIIMDYLDKNYNVSIASIGDVLIATTHVSLLIEAKQRGHNVKVIPGISVHCYLISKSLLSSYKFGKSVTVTFPYNDFIDPTPYNVIKDNKERGLHTILYLDLKSEKAMTANEALQILLRLEDKHRKNVLSKSDIVIVGARLGCDDEKIVALTVEEATLYDFGNTPHIIIIPGNLHYMEADAIKWMLMS.

S-adenosyl-L-methionine is bound by residues isoleucine 11, aspartate 89, isoleucine 92, 117-118, leucine 169, leucine 210, and histidine 235; that span reads SV.

This sequence belongs to the diphthine synthase family. As to quaternary structure, homodimer.

The enzyme catalyses 2-[(3S)-amino-3-carboxypropyl]-L-histidyl-[translation elongation factor 2] + 3 S-adenosyl-L-methionine = diphthine-[translation elongation factor 2] + 3 S-adenosyl-L-homocysteine + 3 H(+). Its pathway is protein modification; peptidyl-diphthamide biosynthesis. S-adenosyl-L-methionine-dependent methyltransferase that catalyzes the trimethylation of the amino group of the modified target histidine residue in translation elongation factor 2 (EF-2), to form an intermediate called diphthine. The three successive methylation reactions represent the second step of diphthamide biosynthesis. In Saccharolobus islandicus (strain L.S.2.15 / Lassen #1) (Sulfolobus islandicus), this protein is Diphthine synthase.